We begin with the raw amino-acid sequence, 80 residues long: DNA-directed RNA polymerase RPB10 homolog (80 aa).

Zn(2+) is bound by residues Cys-7, Cys-10, Cys-65, and Cys-66.

It belongs to the archaeal RpoN/eukaryotic RPB10 RNA polymerase subunit family. Part of the viral DNA-directed RNA polymerase that consists of 8 polII-like subunits (RPB1, RPB2, RPB3, RPB5, RPB6, RPB7, RPB9, RPB10), a capping enzyme and a termination factor.

It is found in the host cytoplasm. Component of the DNA-directed RNA polymerase (RNAP) that catalyzes the transcription in the cytoplasm of viral DNA into RNA using the four ribonucleoside triphosphates as substrates. In African swine fever virus (strain Badajoz 1971 Vero-adapted) (Ba71V), this protein is DNA-directed RNA polymerase RPB10 homolog.